Reading from the N-terminus, the 134-residue chain is MSWQTYVDDHLMCELEGNPGHHLSAAAILGQDGSVWAQSSAFPQFKPEEINGITTDFNEPGHLAPTGLHLGGAKYMVIAGEPGAVIRGKKGAGGITIKKTGQALVFGLYEEPVTPGQCNMVVERLGDYLLEQGL.

C13 and C118 form a disulfide bridge. The Involved in PIP2 interaction motif lies at A84–T100. At T114 the chain carries Phosphothreonine.

This sequence belongs to the profilin family. In terms of assembly, occurs in many kinds of cells as a complex with monomeric actin in a 1:1 ratio. Post-translationally, phosphorylated by MAP kinases.

It localises to the cytoplasm. Its subcellular location is the cytoskeleton. Its function is as follows. Binds to actin and affects the structure of the cytoskeleton. At high concentrations, profilin prevents the polymerization of actin, whereas it enhances it at low concentrations. This chain is Profilin-2, found in Olea europaea (Common olive).